A 502-amino-acid polypeptide reads, in one-letter code: Dynein regulatory complex subunit 2 (502 aa).

Coiled coils occupy residues 96–160 (DSVI…RKAI) and 252–285 (EKSSKEIEVQMKKIQRLQEAISALKGKIVAHSRE).

It belongs to the DRC2 family. As to quaternary structure, component of the nexin-dynein regulatory complex (N-DRC). Interacts with DRC1.

The protein resides in the cytoplasm. It is found in the cytoskeleton. The protein localises to the flagellum basal body. Its subcellular location is the cell projection. It localises to the cilium. The protein resides in the flagellum. It is found in the flagellum axoneme. In terms of biological role, component of the nexin-dynein regulatory complex (N-DRC), a key regulator of ciliary/flagellar motility which maintains the alignment and integrity of the distal axoneme and regulates microtubule sliding in motile axonemes. Plays a critical role in the assembly of N-DRC and also stabilizes the assembly of multiple inner dynein arms and radial spokes. Coassembles with DRC1 to form a central scaffold needed for assembly of the N-DRC and its attachment to the outer doublet microtubules. The polypeptide is Dynein regulatory complex subunit 2 (Ccdc65) (Rattus norvegicus (Rat)).